Reading from the N-terminus, the 135-residue chain is Thioredoxin H5 (135 aa).

The 116-residue stretch at 13–128 (EHLDYSGGNV…LQEKFEQLNR (116 aa)) folds into the Thioredoxin domain. Catalysis depends on nucleophile residues cysteine 54 and cysteine 57. Cysteine 54 and cysteine 57 are oxidised to a cystine.

It belongs to the thioredoxin family. Plant H-type subfamily.

It is found in the cytoplasm. Its function is as follows. Probable thiol-disulfide oxidoreductase that may be involved in the redox regulation of a number of cytosolic enzymes. In Oryza sativa subsp. japonica (Rice), this protein is Thioredoxin H5.